The primary structure comprises 122 residues: Large ribosomal subunit protein uL14 (122 aa).

The protein belongs to the universal ribosomal protein uL14 family. In terms of assembly, part of the 50S ribosomal subunit. Forms a cluster with proteins L3 and L19. In the 70S ribosome, L14 and L19 interact and together make contacts with the 16S rRNA in bridges B5 and B8.

In terms of biological role, binds to 23S rRNA. Forms part of two intersubunit bridges in the 70S ribosome. This Kineococcus radiotolerans (strain ATCC BAA-149 / DSM 14245 / SRS30216) protein is Large ribosomal subunit protein uL14.